Reading from the N-terminus, the 456-residue chain is Methylenetetrahydrofolate--tRNA-(uracil-5-)-methyltransferase TrmFO (456 aa).

11-16 contacts FAD; sequence GGGLAG.

The protein belongs to the MnmG family. TrmFO subfamily. FAD is required as a cofactor.

It is found in the cytoplasm. The catalysed reaction is uridine(54) in tRNA + (6R)-5,10-methylene-5,6,7,8-tetrahydrofolate + NADH + H(+) = 5-methyluridine(54) in tRNA + (6S)-5,6,7,8-tetrahydrofolate + NAD(+). It carries out the reaction uridine(54) in tRNA + (6R)-5,10-methylene-5,6,7,8-tetrahydrofolate + NADPH + H(+) = 5-methyluridine(54) in tRNA + (6S)-5,6,7,8-tetrahydrofolate + NADP(+). In terms of biological role, catalyzes the folate-dependent formation of 5-methyl-uridine at position 54 (M-5-U54) in all tRNAs. This is Methylenetetrahydrofolate--tRNA-(uracil-5-)-methyltransferase TrmFO from Synechocystis sp. (strain ATCC 27184 / PCC 6803 / Kazusa).